The chain runs to 179 residues: Large ribosomal subunit protein uL5 (179 aa).

It belongs to the universal ribosomal protein uL5 family. As to quaternary structure, part of the 50S ribosomal subunit; part of the 5S rRNA/L5/L18/L25 subcomplex. Contacts the 5S rRNA and the P site tRNA. Forms a bridge to the 30S subunit in the 70S ribosome.

In terms of biological role, this is one of the proteins that bind and probably mediate the attachment of the 5S RNA into the large ribosomal subunit, where it forms part of the central protuberance. In the 70S ribosome it contacts protein S13 of the 30S subunit (bridge B1b), connecting the 2 subunits; this bridge is implicated in subunit movement. Contacts the P site tRNA; the 5S rRNA and some of its associated proteins might help stabilize positioning of ribosome-bound tRNAs. This chain is Large ribosomal subunit protein uL5, found in Histophilus somni (strain 129Pt) (Haemophilus somnus).